A 61-amino-acid polypeptide reads, in one-letter code: Small ribosomal subunit protein uS14 (61 aa).

Residues C24, C27, C40, and C43 each contribute to the Zn(2+) site.

It belongs to the universal ribosomal protein uS14 family. Zinc-binding uS14 subfamily. Part of the 30S ribosomal subunit. Contacts proteins S3 and S10. The cofactor is Zn(2+).

Functionally, binds 16S rRNA, required for the assembly of 30S particles and may also be responsible for determining the conformation of the 16S rRNA at the A site. The protein is Small ribosomal subunit protein uS14 of Borreliella burgdorferi (strain ATCC 35210 / DSM 4680 / CIP 102532 / B31) (Borrelia burgdorferi).